The chain runs to 391 residues: MAQWPEKEEEEQPMFGEEYTGYIPSYLEKDEPCVVCGDKATGYHYRCITCEGCKGFFRRTIQKNLHPSYSCKYDCCCIIDKITRNQCQLCRFKKCIAVGMAMDLVLDDSKRVAKRRLIEENRERRKKEEIVKTLQNRPEPTGAEWELIRMVTEAHRHTNAQGAQWKQKRKFLPDKIGQSPVAPTSDGDKVDLEAFSEFTKIITPAITRVVDFAKKLPMFSEQLPCEDQIILLKGCCMEIMSLRAAMRYDPESETLTLSGEMAVKREQLKNGGLGVVSDAIFDLGKSLAQFNLDDTEVALLQAVLLMSSDRSGLTCMDKIEKCQETYLLAFEHYINYRKHNIPHFWPKLLMKVTDLRMIGACHASRFLHMKVECPNELFPPLFLEVFEDQEV.

A modulating region spans residues 1 to 32 (MAQWPEKEEEEQPMFGEEYTGYIPSYLEKDEP). NR C4-type zinc fingers lie at residues 33–53 (CVVCGDKATGYHYRCITCEGC) and 71–95 (CKYDCCCIIDKITRNQCQLCRFKKC). The nuclear receptor DNA-binding region spans 33-100 (CVVCGDKATG…RFKKCIAVGM (68 aa)). The NR LBD domain maps to 143–388 (AEWELIRMVT…PPLFLEVFED (246 aa)).

Belongs to the nuclear hormone receptor family. NR1 subfamily.

Its subcellular location is the nucleus. Functionally, high affinity receptor for triiodothyronine. The sequence is that of Thyroid hormone receptor alpha-B (thra2) from Paralichthys olivaceus (Bastard halibut).